Here is a 247-residue protein sequence, read N- to C-terminus: NAD(P)H-quinone oxidoreductase subunit K (247 aa).

[4Fe-4S] cluster contacts are provided by Cys63, Cys64, Cys128, and Cys159.

The protein belongs to the complex I 20 kDa subunit family. NDH-1 can be composed of about 15 different subunits; different subcomplexes with different compositions have been identified which probably have different functions. [4Fe-4S] cluster is required as a cofactor.

It localises to the cellular thylakoid membrane. The catalysed reaction is a plastoquinone + NADH + (n+1) H(+)(in) = a plastoquinol + NAD(+) + n H(+)(out). It carries out the reaction a plastoquinone + NADPH + (n+1) H(+)(in) = a plastoquinol + NADP(+) + n H(+)(out). NDH-1 shuttles electrons from an unknown electron donor, via FMN and iron-sulfur (Fe-S) centers, to quinones in the respiratory and/or the photosynthetic chain. The immediate electron acceptor for the enzyme in this species is believed to be plastoquinone. Couples the redox reaction to proton translocation, and thus conserves the redox energy in a proton gradient. Cyanobacterial NDH-1 also plays a role in inorganic carbon-concentration. In Microcystis aeruginosa (strain NIES-843 / IAM M-2473), this protein is NAD(P)H-quinone oxidoreductase subunit K.